The chain runs to 158 residues: ATP synthase subunit b', chloroplastic (158 aa).

Residues 21 to 41 form a helical membrane-spanning segment; the sequence is GTLPLMALQFLILMLLLNTIF.

Belongs to the ATPase B chain family. As to quaternary structure, F-type ATPases have 2 components, F(1) - the catalytic core - and F(0) - the membrane proton channel. F(1) has five subunits: alpha(3), beta(3), gamma(1), delta(1), epsilon(1). F(0) has four main subunits: a(1), b(1), b'(1) and c(10-14). The alpha and beta chains form an alternating ring which encloses part of the gamma chain. F(1) is attached to F(0) by a central stalk formed by the gamma and epsilon chains, while a peripheral stalk is formed by the delta, b and b' chains.

It localises to the plastid. The protein localises to the chloroplast thylakoid membrane. Functionally, f(1)F(0) ATP synthase produces ATP from ADP in the presence of a proton or sodium gradient. F-type ATPases consist of two structural domains, F(1) containing the extramembraneous catalytic core and F(0) containing the membrane proton channel, linked together by a central stalk and a peripheral stalk. During catalysis, ATP synthesis in the catalytic domain of F(1) is coupled via a rotary mechanism of the central stalk subunits to proton translocation. Component of the F(0) channel, it forms part of the peripheral stalk, linking F(1) to F(0). The b'-subunit is a diverged and duplicated form of b found in plants and photosynthetic bacteria. In Porphyra purpurea (Red seaweed), this protein is ATP synthase subunit b', chloroplastic.